Consider the following 573-residue polypeptide: Anti-Muellerian hormone type-2 receptor (573 aa).

A signal peptide spans 1–17 (MLGSLGLWALLPTAVEA). Residues 18–149 (PPNRRTCVFF…APGESIWMAL (132 aa)) lie on the Extracellular side of the membrane. 2 disulfides stabilise this stretch: Cys55/Cys79 and Cys92/Cys109. An N-linked (GlcNAc...) asparagine glycan is attached at Asn66. N-linked (GlcNAc...) asparagine glycosylation is present at Asn119. A helical membrane pass occupies residues 150–170 (VLLGLFLLLLLLLGSIILALL). Topologically, residues 171-573 (QRKNYRVRGE…PQPACTLSPV (403 aa)) are cytoplasmic. The 316-residue stretch at 203–518 (LCFSQVIREG…AHPQESHPFP (316 aa)) folds into the Protein kinase domain. ATP contacts are provided by residues 209 to 217 (IREGGHAVV) and Lys230. Asp333 acts as the Proton acceptor in catalysis.

This sequence belongs to the protein kinase superfamily. TKL Ser/Thr protein kinase family. TGFB receptor subfamily. Interacts with type I receptor ACVR1. Mg(2+) is required as a cofactor. The cofactor is Mn(2+).

Its subcellular location is the membrane. It catalyses the reaction L-threonyl-[receptor-protein] + ATP = O-phospho-L-threonyl-[receptor-protein] + ADP + H(+). The catalysed reaction is L-seryl-[receptor-protein] + ATP = O-phospho-L-seryl-[receptor-protein] + ADP + H(+). Its function is as follows. On ligand binding, forms a receptor complex consisting of two type II and two type I transmembrane serine/threonine kinases. Type II receptors phosphorylate and activate type I receptors which autophosphorylate, then bind and activate SMAD transcriptional regulators. Receptor for anti-Muellerian hormone. In Homo sapiens (Human), this protein is Anti-Muellerian hormone type-2 receptor (AMHR2).